The following is a 501-amino-acid chain: G protein-activated inward rectifier potassium channel 1 (501 aa).

The disordered stretch occupies residues 1 to 40 (MSALRRKFGDDYQVVTTSSSGSGLQPQGPGQDPQQQLVPK). Over 1–80 (MSALRRKFGD…LFTTLVDLKW (80 aa)) the chain is Cytoplasmic. A compositionally biased stretch (low complexity) spans 18 to 38 (SSSGSGLQPQGPGQDPQQQLV). A helical membrane pass occupies residues 81–105 (RWNLFIFILTYTVAWLFMASMWWVI). Over 106-129 (AYTRGDLNKAHVGNYTPCVANVYN) the chain is Extracellular. Asn119 carries an N-linked (GlcNAc...) asparagine glycan. An intramembrane region (helical; Pore-forming) is located at residues 130–141 (FPSAFLFFIETE). Positions 142–148 (ATIGYGY) form an intramembrane region, pore-forming. The Selectivity filter motif lies at 143–148 (TIGYGY). The Extracellular segment spans residues 149–157 (RYITDKCPE). A helical transmembrane segment spans residues 158–179 (GIILFLFQSILGSIVDAFLIGC). At 180–501 (MFIKMSQPKK…LRKMNSDRFT (322 aa)) the chain is on the cytoplasmic side. Residues 182–209 (IKMSQPKKRAETLMFSEHAVISMRDGKL) form a polyphosphoinositide (PIP2)-binding region. Ser385 and Ser424 each carry phosphoserine.

It belongs to the inward rectifier-type potassium channel (TC 1.A.2.1) family. KCNJ3 subfamily. In terms of assembly, associates with KCNJ5/GIRK4 or KCNJ6/GIRK2 to form a G-protein activated heteromultimer pore-forming unit. The resulting inward current is much larger. Associates with KCNJ9/GIRK3 to form a G-protein activated heteromultimer pore-forming unit.

The protein localises to the membrane. It catalyses the reaction K(+)(in) = K(+)(out). Heteromultimer composed of KCNJ3/GIRK1 and KCNJ5/GIRK4 is activated by phosphatidylinositol 4,5 biphosphate (PtdIns(4,5)P2). Functionally, inward rectifier potassium channels are characterized by a greater tendency to allow potassium to flow into the cell rather than out of it. Their voltage dependence is regulated by the concentration of extracellular potassium; as external potassium is raised, the voltage range of the channel opening shifts to more positive voltages. The inward rectification is mainly due to the blockage of outward current by internal magnesium. This potassium channel is controlled by G proteins. This receptor plays a crucial role in regulating the heartbeat. The chain is G protein-activated inward rectifier potassium channel 1 (KCNJ3) from Homo sapiens (Human).